The following is a 1265-amino-acid chain: Nestin (1265 aa).

A head region spans residues 1–16; sequence MELLGVRQPFGPQFQE. The segment at 17 to 52 is coil 1A; the sequence is EKYQMLELNHRLESYLGRVKLLEEENKLLREEIHTL. The IF rod domain occupies 17 to 324; the sequence is EKYQMLELNH…ALLDSEGLRI (308 aa). Residues 53 to 64 form a linker 1 region; that stretch reads KSSRDPAGQRKA. The tract at residues 65–160 is coil 1B; sequence QEEALSQARR…QVHQENMETM (96 aa). Residues 161 to 183 form a linker 12 region; that stretch reads QASLKQTKQVLMAPQRVQATSIP. A coil 2A region spans residues 184–203; that stretch reads DLGQEYGYKAAQAWQEAANN. Residues 204–206 are linker 2; it reads YQK. Residues 207 to 324 are coil 2B; sequence QVGRLEESLN…ALLDSEGLRI (118 aa). The segment at 325–1265 is tail; the sequence is DRPTPNKTSS…EGDSWSSGDE (941 aa). Polar residues predominate over residues 383 to 402; that stretch reads PSWTLTRGTPQRPPSSTSMT. 5 disordered regions span residues 383–521, 667–830, 863–1073, 1093–1116, and 1232–1265; these read PSWT…TEVS, FEVE…PDME, HESL…KASQ, AQTT…LESS, and IRDD…SGDE. Residues 403–418 show a composition bias toward basic and acidic residues; sequence EKTEDHISEETKRSAE. Residues 422 to 441 are compositionally biased toward polar residues; sequence DQLQQEKVQQDWTLESTLPK. Residues 444–459 show a composition bias toward basic and acidic residues; sequence AEPKPELQPEEIKVED. Residues 479-496 show a composition bias toward polar residues; that stretch reads LTSVPAEQQGSMSQTPET. Acidic residues-rich tracts occupy residues 508–520 and 730–739; these read EVSE…DTEV and LNEDQSEAEE. Composition is skewed to basic and acidic residues over residues 784–796, 803–819, and 863–897; these read YKSD…HIGE, EKER…RFNT, and HESL…KEED. The span at 901–910 shows a compositional bias: polar residues; sequence FEQNENQQLT. Basic and acidic residues predominate over residues 911–935; it reads EHQHVHTEQVEDKPVHSHETQEHVN. Positions 943 to 956 are enriched in low complexity; the sequence is SERSQQEQLEESSL. Polar residues predominate over residues 1015 to 1043; the sequence is PNASQCFQNTSLLAAATPNEQPLTFTNEV. A compositionally biased stretch (basic and acidic residues) spans 1061 to 1070; sequence SEEKSTDEPK. Composition is skewed to polar residues over residues 1105 to 1116 and 1242 to 1251; these read SISPVNENLESS and PAQSKIVQSD. The segment covering 1252-1265 has biased composition (acidic residues); that stretch reads DSADEGDSWSSGDE.

The protein belongs to the intermediate filament family. As to quaternary structure, forms homodimers and homotetramers in vitro. In mixtures with other intermediate filament proteins such as vimentin and alpha-internexin, preferentially forms heterodimers. Widely expressed throughout the developing nervous system at 24 hours post-fertilization (hpf). As development progresses, expression becomes restricted to proliferative zones of the developing and postembryonic central nervous system. In the peripheral nervous system, expressed in the cranial ganglia. Also expressed in mesodermal muscle precursor cells and in cranial mesenchymal tissue.

In terms of biological role, promotes the disassembly of phosphorylated vimentin intermediate filaments (IF) during mitosis and may play a role in the trafficking and distribution of IF proteins and other cellular factors to daughter cells during progenitor cell division. Required for survival, renewal and mitogen-stimulated proliferation of neural progenitor cells. Required for brain and eye development. The chain is Nestin (nes) from Danio rerio (Zebrafish).